The primary structure comprises 394 residues: Elongation factor Tu (394 aa).

The tr-type G domain maps to 10–204 (KPHVNVGTIG…HLDTYIPEPE (195 aa)). The G1 stretch occupies residues 19–26 (GHVDHGKT). Residue 19–26 (GHVDHGKT) participates in GTP binding. Threonine 26 lines the Mg(2+) pocket. The interval 60–64 (GITIN) is G2. Residues 81-84 (DCPG) are G3. GTP is bound by residues 81–85 (DCPGH) and 136–139 (NKCD). The tract at residues 136–139 (NKCD) is G4. The segment at 174–176 (SAL) is G5.

Belongs to the TRAFAC class translation factor GTPase superfamily. Classic translation factor GTPase family. EF-Tu/EF-1A subfamily. As to quaternary structure, monomer.

The protein localises to the cytoplasm. The enzyme catalyses GTP + H2O = GDP + phosphate + H(+). Functionally, GTP hydrolase that promotes the GTP-dependent binding of aminoacyl-tRNA to the A-site of ribosomes during protein biosynthesis. This Actinobacillus pleuropneumoniae serotype 5b (strain L20) protein is Elongation factor Tu.